The chain runs to 261 residues: RNA-binding protein 1 (261 aa).

2 disordered regions span residues 1 to 38 (MADG…SGNE) and 232 to 261 (QFSR…RGRR). One can recognise an RRM domain in the interval 151-236 (PTLYIEGLPS…SHLRLQFSRY (86 aa)). The segment covering 240–254 (RSGGGPRSSGPPRGG) has biased composition (gly residues).

Ubiquitous.

It is found in the nucleus speckle. Its subcellular location is the cytoplasmic granule. In terms of biological role, RNA-binding protein interacting with the enod40 RNA. The protein is RNA-binding protein 1 of Medicago truncatula (Barrel medic).